The primary structure comprises 1054 residues: Bifunctional cytochrome P450/NADPH--P450 reductase 2 (1054 aa).

The interval 1-475 (MKQASAIPQP…QADIKAETKP (475 aa)) is cytochrome P450. Position 403 (cysteine 403) interacts with heme. A compositionally biased stretch (basic and acidic residues) spans 462–480 (QRKEQADIKAETKPKETKP). Positions 462 to 482 (QRKEQADIKAETKPKETKPKH) are disordered. Positions 476-1053 (KETKPKHGTP…RRYVKDVWTG (578 aa)) are NADPH--P450 reductase. The Flavodoxin-like domain maps to 486-625 (LLVLFGSNLG…HRESWENRFW (140 aa)). Residues 492 to 497 (SNLGTA), 539 to 542 (SYNG), 573 to 575 (CGN), and 581 to 583 (TYQ) contribute to the FMN site. An FAD-binding FR-type domain is found at 663-896 (YGAFEGIVLE…RTPQSGFQMP (234 aa)).

It in the N-terminal section; belongs to the cytochrome P450 family. The cofactor is FAD. It depends on FMN as a cofactor. Heme b serves as cofactor.

It localises to the cytoplasm. The enzyme catalyses an organic molecule + reduced [NADPH--hemoprotein reductase] + O2 = an alcohol + oxidized [NADPH--hemoprotein reductase] + H2O + H(+). The catalysed reaction is 2 oxidized [cytochrome P450] + NADPH = 2 reduced [cytochrome P450] + NADP(+) + H(+). Its function is as follows. Functions as a fatty acid monooxygenase. Catalyzes hydroxylation of a range of medium to long-chain fatty acids, with a preference for long-chain unsaturated and branched-chain fatty acids over saturated fatty acids. Hydroxylation of myristic acid occurs mainly at the omega-2 and omega-3 positions, in approximately equal proportions. Also displays a NADPH-dependent reductase activity in the C-terminal domain, which allows electron transfer from NADPH to the heme iron of the cytochrome P450 N-terminal domain. The polypeptide is Bifunctional cytochrome P450/NADPH--P450 reductase 2 (Bacillus subtilis (strain 168)).